A 635-amino-acid chain; its full sequence is Probable monoacyl phosphatidylinositol tetramannoside-binding protein LpqW (635 aa).

The first 26 residues, 1 to 26 (MGVPSPVRRVCVTVGALVALACMVLA), serve as a signal peptide directing secretion. Disordered regions lie at residues 32-52 (PPPA…PRRP), 389-412 (NTSV…GPPE), and 511-551 (NAPT…LVKA). Composition is skewed to low complexity over residues 390-411 (TSVS…TGPP) and 511-531 (NAPT…APDT).

The protein belongs to the bacterial solute-binding protein 5 family.

It participates in phospholipid metabolism; phosphatidylinositol metabolism. Functionally, may directly or indirectly regulate the accessibility of the key branch point intermediate, monoacyl phosphatidylinositol tetramannoside (AcPIM4), to the elongating alpha-1,6 mannosyltransferases which could regulate the lipoarabinomannans (LAMs) biosynthesis. This Mycobacterium tuberculosis (strain CDC 1551 / Oshkosh) protein is Probable monoacyl phosphatidylinositol tetramannoside-binding protein LpqW (lpqW).